The following is a 166-amino-acid chain: Putative lipoprotein Lxx21020 (166 aa).

Residues 1–22 (MTKTTRLLRATTVAAILLGLTG) form the signal peptide. Cys23 carries N-palmitoyl cysteine lipidation. A lipid anchor (S-diacylglycerol cysteine) is attached at Cys23.

The protein localises to the cell membrane. This Leifsonia xyli subsp. xyli (strain CTCB07) protein is Putative lipoprotein Lxx21020.